The primary structure comprises 312 residues: Olfactory receptor 6C2 (312 aa).

Topologically, residues 1–23 are extracellular; it reads MKNHTVIRTFILLGLTGDPHLQV. The N-linked (GlcNAc...) asparagine glycan is linked to Asn3. Residues 24–44 traverse the membrane as a helical segment; it reads LLFIFLFLTYMLSVTGNLTII. The Cytoplasmic portion of the chain corresponds to 45–52; that stretch reads TLTLVDHH. The helical transmembrane segment at 53–73 threads the bilayer; it reads LKTPMYFFLRNFSFLEVSFTT. Over 74–97 the chain is Extracellular; it reads VCIPRFLYNISMGDNTITYNACAS. N-linked (GlcNAc...) asparagine glycosylation is present at Asn82. Cys95 and Cys187 are disulfide-bonded. The chain crosses the membrane as a helical span at residues 98–118; it reads QIFFVILFGATEFFLLAAMSY. Over 119 to 137 the chain is Cytoplasmic; sequence DRYVAICKPLHYVVIMNNR. Residues 138-158 form a helical membrane-spanning segment; it reads VCTLLVLCCWVAGLMIIVPPL. Over 159 to 195 the chain is Extracellular; the sequence is SLGLQLEFCDSNAIDHFSCDAGPLLKISCSDTWVIEQ. Residues 196–215 traverse the membrane as a helical segment; the sequence is MVILMAVFALIITLVCVILS. At 216–235 the chain is on the cytoplasmic side; that stretch reads YLYIVRTILKFPSVQQRKKA. Residues 236–256 form a helical membrane-spanning segment; the sequence is FSTCSSHMIVVSIAYGSCIFI. The Extracellular segment spans residues 257–269; sequence YIKPSAKDEVAIN. The chain crosses the membrane as a helical span at residues 270-290; sequence KGVSVLTTSVAPLLNPFIYTL. At 291 to 312 the chain is on the cytoplasmic side; that stretch reads RNKQVKQAFSDSIKRIAFLSKK.

Belongs to the G-protein coupled receptor 1 family.

The protein localises to the cell membrane. Odorant receptor. This Homo sapiens (Human) protein is Olfactory receptor 6C2 (OR6C2).